The sequence spans 346 residues: Phosphoribosylformylglycinamidine cyclo-ligase (346 aa).

Belongs to the AIR synthase family.

It localises to the cytoplasm. The enzyme catalyses 2-formamido-N(1)-(5-O-phospho-beta-D-ribosyl)acetamidine + ATP = 5-amino-1-(5-phospho-beta-D-ribosyl)imidazole + ADP + phosphate + H(+). It functions in the pathway purine metabolism; IMP biosynthesis via de novo pathway; 5-amino-1-(5-phospho-D-ribosyl)imidazole from N(2)-formyl-N(1)-(5-phospho-D-ribosyl)glycinamide: step 2/2. The sequence is that of Phosphoribosylformylglycinamidine cyclo-ligase from Vibrio vulnificus (strain YJ016).